The sequence spans 239 residues: Ribonuclease HII (239 aa).

Positions 30-221 (GPVAGVDEVG…VRRLVTAGTP (192 aa)) constitute an RNase H type-2 domain. The a divalent metal cation site is built by aspartate 36, glutamate 37, and aspartate 130.

Belongs to the RNase HII family. Requires Mn(2+) as cofactor. It depends on Mg(2+) as a cofactor.

Its subcellular location is the cytoplasm. It catalyses the reaction Endonucleolytic cleavage to 5'-phosphomonoester.. Its function is as follows. Endonuclease that specifically degrades the RNA of RNA-DNA hybrids. In Mycobacterium sp. (strain JLS), this protein is Ribonuclease HII.